A 256-amino-acid chain; its full sequence is Pimeloyl-[acyl-carrier protein] methyl ester esterase (256 aa).

Positions 15 to 242 (HLVLLHGWGL…AAHAPFISHP (228 aa)) constitute an AB hydrolase-1 domain. Substrate is bound by residues tryptophan 22, 82-83 (SL), and 143-147 (FLALQ). The active-site Nucleophile is serine 82. Active-site residues include aspartate 207 and histidine 235. Histidine 235 contacts substrate.

It belongs to the AB hydrolase superfamily. Carboxylesterase BioH family. Monomer.

It localises to the cytoplasm. It carries out the reaction 6-carboxyhexanoyl-[ACP] methyl ester + H2O = 6-carboxyhexanoyl-[ACP] + methanol + H(+). Its pathway is cofactor biosynthesis; biotin biosynthesis. The physiological role of BioH is to remove the methyl group introduced by BioC when the pimeloyl moiety is complete. It allows to synthesize pimeloyl-ACP via the fatty acid synthetic pathway through the hydrolysis of the ester bonds of pimeloyl-ACP esters. The polypeptide is Pimeloyl-[acyl-carrier protein] methyl ester esterase (Salmonella agona (strain SL483)).